The following is a 134-amino-acid chain: U34-theraphotoxin-Cg1a (134 aa).

Residues 1 to 19 (MKLAVVFLLTTVVFTLAQS) form the signal peptide. 3 disulfides stabilise this stretch: Cys24-Cys35, Cys29-Cys53, and Cys63-Cys84. The segment at 97–134 (EQSSTSTSSTQGPITSSTVTTQSEATTETETTTAAEGK) is disordered. Residues 99 to 134 (SSTSTSSTQGPITSSTVTTQSEATTETETTTAAEGK) are compositionally biased toward low complexity.

The protein belongs to the neurotoxin 32 family. Expressed by the venom gland.

Its subcellular location is the secreted. The polypeptide is U34-theraphotoxin-Cg1a (Chilobrachys guangxiensis (Chinese earth tiger tarantula)).